We begin with the raw amino-acid sequence, 902 residues long: Auxin response factor 5 (902 aa).

A DNA-binding region (TF-B3) is located at residues 158–260 (FCKTLTASDT…QLMVGVRRAN (103 aa)). Positions 497-543 (SEMVQPQNKLTVNPSASNTSGQEQNLSQSMSAPAKPENSTLSGCSSG) are disordered. Residues 793–877 (RTYTKVQKTG…RCIRILSPTE (85 aa)) enclose the PB1 domain.

It belongs to the ARF family. Homodimers and heterodimers. Interacts with BRX and the auxin-responsive proteins IAA1, IAA12 (BODENLOS), IAA17 and ARF7. In terms of tissue distribution, expressed in the whole plant with a lower expression in leaves. Detected in embryo axis, provascular tissues, procambium and some differentiated vascular regions of mature organs.

It localises to the nucleus. Functionally, auxin response factors (ARFs) are transcriptional factors that bind specifically to the DNA sequence 5'-TGTCTC-3' found in the auxin-responsive promoter elements (AuxREs). Seems to act as transcriptional activator. Formation of heterodimers with Aux/IAA proteins may alter their ability to modulate early auxin response genes expression. Mediates embryo axis formation and vascular tissues differentiation. Functionally redundant with ARF7. May be necessary to counteract AMP1 activity. This chain is Auxin response factor 5 (ARF5), found in Arabidopsis thaliana (Mouse-ear cress).